Here is a 559-residue protein sequence, read N- to C-terminus: 2,3-bisphosphoglycerate-independent phosphoglycerate mutase (559 aa).

Residues Asp-28 and Ser-81 each coordinate Mn(2+). The active-site Phosphoserine intermediate is the Ser-81. Substrate contacts are provided by residues His-140, 170–171 (RD), Arg-206, Arg-213, 286–289 (RADR), and Lys-361. Mn(2+) is bound by residues Asp-430, His-434, Asp-471, His-472, and His-501.

The protein belongs to the BPG-independent phosphoglycerate mutase family. In terms of assembly, monomer. Mn(2+) is required as a cofactor.

The protein resides in the cytoplasm. The enzyme catalyses (2R)-2-phosphoglycerate = (2R)-3-phosphoglycerate. The protein operates within carbohydrate degradation; glycolysis; pyruvate from D-glyceraldehyde 3-phosphate: step 3/5. Catalyzes the interconversion of 2-phosphoglycerate and 3-phosphoglycerate. The chain is 2,3-bisphosphoglycerate-independent phosphoglycerate mutase (PGM1) from Mesembryanthemum crystallinum (Common ice plant).